Here is a 589-residue protein sequence, read N- to C-terminus: PTS system mannitol-specific EIICB component (589 aa).

Residues 1-25 (MEEKVSLKVRVQKLGTSLSNMVMPN) are Cytoplasmic-facing. A PTS EIIC type-2 domain is found at 14 to 347 (LGTSLSNMVM…LHADKSTEDS (334 aa)). The helical transmembrane segment at 26-47 (IGAFIAWGVLTALFIADGYLPN) threads the bilayer. The Extracellular segment spans residues 48-51 (EQLA). A helical transmembrane segment spans residues 52–72 (TVVGPMLTYLLPILIGYTGGY). Residues 73-135 (MIHGQRGAVV…PGFEMLVNNF (63 aa)) are Cytoplasmic-facing. A helical transmembrane segment spans residues 136–157 (SAGLVGFALLLLAFYAIGPVVS). Residues 158–166 (TLTGAVGNG) are Extracellular-facing. A helical transmembrane segment spans residues 167–187 (VEAIVNARLLPMANIIIEPAK). Over 188–274 (VLFLNNALNH…VMMKPTLFLA (87 aa)) the chain is Cytoplasmic. A helical transmembrane segment spans residues 275 to 294 (AMAGGISGTFTFQLLDAGLK). Over 295-316 (SPASPGSIIAIMATAPKGVWPH) the chain is Extracellular. Residues 317–338 (LNILLGVLVAAVVSFLIAALIL) form a helical membrane-spanning segment. Topologically, residues 339–589 (HADKSTEDSL…YDKMAARMYK (251 aa)) are cytoplasmic. One can recognise a PTS EIIB type-2 domain in the interval 381–476 (EKIIFACDAG…SLTGASPIAE (96 aa)). The active-site Phosphocysteine intermediate; for EIIB activity is Cys-387. Cys-387 is modified (phosphocysteine; by EIIA).

Homodimer.

Its subcellular location is the cell membrane. The catalysed reaction is D-mannitol(out) + N(pros)-phospho-L-histidyl-[protein] = D-mannitol 1-phosphate(in) + L-histidyl-[protein]. Its function is as follows. The phosphoenolpyruvate-dependent sugar phosphotransferase system (sugar PTS), a major carbohydrate active transport system, catalyzes the phosphorylation of incoming sugar substrates concomitantly with their translocation across the cell membrane. The enzyme II CmtAB PTS system is involved in D-mannitol transport. The chain is PTS system mannitol-specific EIICB component (mtlA) from Streptococcus pneumoniae (strain ATCC BAA-255 / R6).